The sequence spans 162 residues: Putative auxin-responsive protein IAA28 (162 aa).

The 96-residue stretch at Ser23–Ala118 folds into the PB1 domain. Residues Asn122–Asp141 form a disordered region.

It belongs to the Aux/IAA family. In terms of assembly, homodimers and heterodimers.

It localises to the nucleus. Aux/IAA proteins are short-lived transcriptional factors that function as repressors of early auxin response genes at low auxin concentrations. The polypeptide is Putative auxin-responsive protein IAA28 (IAA28) (Oryza sativa subsp. japonica (Rice)).